The chain runs to 601 residues: Elongation factor 4 (601 aa).

Residues 7-189 enclose the tr-type G domain; it reads DTIRNFSIVA…AIVAKLPPPK (183 aa). GTP-binding positions include 19 to 24 and 136 to 139; these read DHGKST and NKID.

It belongs to the TRAFAC class translation factor GTPase superfamily. Classic translation factor GTPase family. LepA subfamily.

The protein localises to the cell inner membrane. It catalyses the reaction GTP + H2O = GDP + phosphate + H(+). Its function is as follows. Required for accurate and efficient protein synthesis under certain stress conditions. May act as a fidelity factor of the translation reaction, by catalyzing a one-codon backward translocation of tRNAs on improperly translocated ribosomes. Back-translocation proceeds from a post-translocation (POST) complex to a pre-translocation (PRE) complex, thus giving elongation factor G a second chance to translocate the tRNAs correctly. Binds to ribosomes in a GTP-dependent manner. The protein is Elongation factor 4 of Methylobacterium nodulans (strain LMG 21967 / CNCM I-2342 / ORS 2060).